A 215-amino-acid chain; its full sequence is MHTVKLLCVVFSCLCAVAWASSHRQPCHAPPLTSGTMKVVSTGGHDLESGEFSYDSKANKFRFVEDTAHANKTSHMDVLIHFEEGVLYEIDSKNESCKKETLQFRKHLMEIPPDATHESEIYMGSPSITEQGLRVRVWNGKFPELHAHYSMSTTSCGCLPVSGSYHGEKKDLHFSFFGVETEVDDLQVFVPPAYCEGVAFEEAPDDHSFFDLFHD.

An N-terminal signal peptide occupies residues 1-20; it reads MHTVKLLCVVFSCLCAVAWA. 2 N-linked (GlcNAc...) asparagine glycosylation sites follow: Asn-71 and Asn-94.

The protein belongs to the ependymin family. Forms disulfide-linked dimers. Different glycosylation variants are known as EPD-beta and EPD-gamma. In terms of processing, binds calcium through the terminal sialic acids. In terms of tissue distribution, EPDs are synthesized in the meninx and secreted in the cerebrospinal fluid.

Its subcellular location is the secreted. Functionally, may play a role in neural plasticity. May be involved during axon regeneration. This chain is Ependymin-1 (epd1), found in Carassius auratus (Goldfish).